Consider the following 249-residue polypeptide: Tryptophan synthase alpha chain (249 aa).

Residues glutamate 43 and aspartate 54 each act as proton acceptor in the active site.

The protein belongs to the TrpA family. Tetramer of two alpha and two beta chains.

The enzyme catalyses (1S,2R)-1-C-(indol-3-yl)glycerol 3-phosphate + L-serine = D-glyceraldehyde 3-phosphate + L-tryptophan + H2O. It functions in the pathway amino-acid biosynthesis; L-tryptophan biosynthesis; L-tryptophan from chorismate: step 5/5. The alpha subunit is responsible for the aldol cleavage of indoleglycerol phosphate to indole and glyceraldehyde 3-phosphate. The protein is Tryptophan synthase alpha chain of Campylobacter jejuni subsp. jejuni serotype O:23/36 (strain 81-176).